The following is a 226-amino-acid chain: PKHD-type hydroxylase Bpet2704 (226 aa).

A Fe2OG dioxygenase domain is found at 78 to 178 (KIFPPLFNRY…RISAFFWMQS (101 aa)). Fe cation is bound by residues His96, Asp98, and His159. Arg169 is a binding site for 2-oxoglutarate.

Requires Fe(2+) as cofactor. It depends on L-ascorbate as a cofactor.

This is PKHD-type hydroxylase Bpet2704 from Bordetella petrii (strain ATCC BAA-461 / DSM 12804 / CCUG 43448).